The following is a 342-amino-acid chain: tRNA-specific 2-thiouridylase MnmA 2 (342 aa).

Cys-62 (nucleophile) is an active-site residue. Cys-62 and Cys-160 form a disulfide bridge. An ATP-binding site is contributed by Gly-86. The interval 110-112 (KDQ) is interaction with tRNA. Cys-160 serves as the catalytic Cysteine persulfide intermediate. Residues 268 to 269 (RY) form an interaction with tRNA region.

The protein belongs to the MnmA/TRMU family.

The protein resides in the cytoplasm. The catalysed reaction is S-sulfanyl-L-cysteinyl-[protein] + uridine(34) in tRNA + AH2 + ATP = 2-thiouridine(34) in tRNA + L-cysteinyl-[protein] + A + AMP + diphosphate + H(+). In terms of biological role, catalyzes the 2-thiolation of uridine at the wobble position (U34) of tRNA, leading to the formation of s(2)U34. The sequence is that of tRNA-specific 2-thiouridylase MnmA 2 from Syntrophus aciditrophicus (strain SB).